Consider the following 290-residue polypeptide: Putative beta-lactamase HcpC (290 aa).

The signal sequence occupies residues 1–25 (MLENVKKSLFRVLCLGALCLGGLMA). TPR repeat units follow at residues 29 to 62 (PKEL…KENS), 64 to 98 (CFNL…NYSN), 100 to 133 (CHLL…LKYA), 134 to 170 (EGCA…NDGD), 172 to 205 (CTIL…LKDS), 206 to 242 (PGCF…ENGG), and 244 to 278 (CFNL…GAKG). Disulfide bonds link cysteine 56–cysteine 64, cysteine 92–cysteine 100, cysteine 128–cysteine 136, cysteine 164–cysteine 172, cysteine 200–cysteine 208, cysteine 236–cysteine 244, and cysteine 272–cysteine 280.

The protein belongs to the hcp beta-lactamase family.

The protein resides in the secreted. The enzyme catalyses a beta-lactam + H2O = a substituted beta-amino acid. Its function is as follows. May hydrolyze 6-aminopenicillinic acid and 7-aminocephalosporanic acid (ACA) derivatives. The sequence is that of Putative beta-lactamase HcpC (hcpC) from Helicobacter pylori (strain J99 / ATCC 700824) (Campylobacter pylori J99).